A 288-amino-acid chain; its full sequence is tRNA dimethylallyltransferase (288 aa).

G17 to T24 is a binding site for ATP. T19–T24 lines the substrate pocket.

The protein belongs to the IPP transferase family. In terms of assembly, monomer. Mg(2+) is required as a cofactor.

The catalysed reaction is adenosine(37) in tRNA + dimethylallyl diphosphate = N(6)-dimethylallyladenosine(37) in tRNA + diphosphate. In terms of biological role, catalyzes the transfer of a dimethylallyl group onto the adenine at position 37 in tRNAs that read codons beginning with uridine, leading to the formation of N6-(dimethylallyl)adenosine (i(6)A). The sequence is that of tRNA dimethylallyltransferase from Jannaschia sp. (strain CCS1).